The chain runs to 248 residues: Aquaporin TIP2-3 (248 aa).

Helical transmembrane passes span 20–40 (AYVA…GSAI) and 54–74 (AGLV…VSMA). The NPA 1 signature appears at 83-85 (NPA). 3 helical membrane-spanning segments follow: residues 97–119 (TILT…CFLL), 141–161 (GVVM…ATAA), and 168–188 (LGTI…LAAG). The NPA 2 motif lies at 196–198 (NPA). A helical membrane pass occupies residues 217–237 (WVGPLVGGGLAGLVYGDVFIA).

This sequence belongs to the MIP/aquaporin (TC 1.A.8) family. TIP (TC 1.A.8.10) subfamily. As to expression, specifically expressed in roots.

The protein resides in the cell membrane. Functionally, water channel required to facilitate the transport of water across cell membrane. In Zea mays (Maize), this protein is Aquaporin TIP2-3 (TIP2-3).